Consider the following 157-residue polypeptide: Protein Smg (157 aa).

It belongs to the Smg family.

The chain is Protein Smg from Pectobacterium carotovorum subsp. carotovorum (strain PC1).